The sequence spans 484 residues: Endoglucanase 3 (484 aa).

The signal sequence occupies residues 1–21 (MASPFFFVFLLSALSLENTYA). Residue Asp77 is the Nucleophile of the active site. An N-linked (GlcNAc...) asparagine glycan is attached at Asn370. Catalysis depends on residues His402, Asp453, and Glu462.

It belongs to the glycosyl hydrolase 9 (cellulase E) family. In terms of tissue distribution, specifically expressed in root cap cells.

Its subcellular location is the secreted. It carries out the reaction Endohydrolysis of (1-&gt;4)-beta-D-glucosidic linkages in cellulose, lichenin and cereal beta-D-glucans.. In terms of biological role, may be involved in the sloughing (cell-cell separation) of the root cap cells from root tip. The sequence is that of Endoglucanase 3 (CEL5) from Arabidopsis thaliana (Mouse-ear cress).